The following is a 498-amino-acid chain: Lipase 3 (498 aa).

The cysteines at positions 60 and 91 are disulfide-linked. N-linked (GlcNAc...) asparagine glycosylation is present at asparagine 193. Catalysis depends on serine 200, which acts as the Acyl-ester intermediate. Residue asparagine 384 is glycosylated (N-linked (GlcNAc...) asparagine). The active-site Charge relay system is the histidine 409. N-linked (GlcNAc...) asparagine glycosylation is present at asparagine 418.

It belongs to the type-B carboxylesterase/lipase family.

It carries out the reaction a triacylglycerol + H2O = a diacylglycerol + a fatty acid + H(+). This is Lipase 3 (LIP3) from Yarrowia lipolytica (strain CLIB 122 / E 150) (Yeast).